Here is a 322-residue protein sequence, read N- to C-terminus: MSNKPSQLTAGKKLRDADKMSHIPIKVVPSNKSTLLKKPSWMKIKLSSDNTRVNEIKAALRKNNLHSVCEEASCPNLNECFNHGTATFMILGDICTRRCPFCDVGHGKPLAVDANEPKKLAETIKDMKLKYVVITSVDRDDLRDGGAQHFADCIREIRLLNPEIKIEILVPDFKGRMDKALACFEQDLPDVFNHNLETAPHLYKQVRPGADYKWSLKLLQKFKEKHPHIPTKSGLMVGLGETNEDIEQVLTDLRAHDVNMLTLGQYLQPSLDHLAVQRFVPPSEFDELGVKAKALGFDQAACGPLVRSSYHADLQASGQEVK.

[4Fe-4S] cluster-binding residues include Cys-69, Cys-74, Cys-80, Cys-95, Cys-99, Cys-102, and Ser-309. In terms of domain architecture, Radical SAM core spans Phe-81–Asp-298.

The protein belongs to the radical SAM superfamily. Lipoyl synthase family. [4Fe-4S] cluster is required as a cofactor.

It localises to the cytoplasm. It catalyses the reaction [[Fe-S] cluster scaffold protein carrying a second [4Fe-4S](2+) cluster] + N(6)-octanoyl-L-lysyl-[protein] + 2 oxidized [2Fe-2S]-[ferredoxin] + 2 S-adenosyl-L-methionine + 4 H(+) = [[Fe-S] cluster scaffold protein] + N(6)-[(R)-dihydrolipoyl]-L-lysyl-[protein] + 4 Fe(3+) + 2 hydrogen sulfide + 2 5'-deoxyadenosine + 2 L-methionine + 2 reduced [2Fe-2S]-[ferredoxin]. Its pathway is protein modification; protein lipoylation via endogenous pathway; protein N(6)-(lipoyl)lysine from octanoyl-[acyl-carrier-protein]: step 2/2. Catalyzes the radical-mediated insertion of two sulfur atoms into the C-6 and C-8 positions of the octanoyl moiety bound to the lipoyl domains of lipoate-dependent enzymes, thereby converting the octanoylated domains into lipoylated derivatives. The protein is Lipoyl synthase of Psychromonas ingrahamii (strain DSM 17664 / CCUG 51855 / 37).